We begin with the raw amino-acid sequence, 670 residues long: Solute carrier organic anion transporter family member 1A5 (670 aa).

Over 1–20 (MGETEKRVATHEVRCFSKIK) the chain is Cytoplasmic. Residues 21–40 (MFLLALTWAYVSKSLSGIYM) traverse the membrane as a helical segment. The Extracellular segment spans residues 41–59 (NTMLTQIERQFDIPTSIVG). A helical transmembrane segment spans residues 60 to 80 (FINGSFEIGNLLLIIFVSYFG). Residues 81-86 (TKLHRP) lie on the Cytoplasmic side of the membrane. Residues 87–111 (IMIGVGCVIMGLGCFLMSLPHFLMG) traverse the membrane as a helical segment. Topologically, residues 112–155 (RYEYETTISPTSNLSSNSFLCMENRSQTLKPTQDPAECIKEMKS) are extracellular. N-linked (GlcNAc...) asparagine glycans are attached at residues Asn124 and Asn135. Residues 156–184 (LMWIYVLVGNIIRGIGETPIMPLGISYIE) traverse the membrane as a helical segment. At 185-203 (DFAKSENSPLYIGILETGK) the chain is on the cytoplasmic side. The chain crosses the membrane as a helical span at residues 204–224 (VFGPIVGLLLGSFCASIYVDT). The Extracellular portion of the chain corresponds to 225 to 242 (GSVNTDDLTITPTDTRWV). Residues 243–267 (GAWWIGFLICAGVNILSSIPFFFFP) traverse the membrane as a helical segment. The Cytoplasmic segment spans residues 268-311 (KTLPKEGLQDDVDGTNNDKEEKHREKAKEENRGITKDFLPFMKS). The helical transmembrane segment at 312–333 (LSCNPIYMLLILTSVLQINAFI) threads the bilayer. Topologically, residues 334 to 353 (NMFTFLPKYLEQQYGKSTAE) are extracellular. A helical transmembrane segment spans residues 354–377 (VVLLIGVYNLPPICIGYLLIGFIM). The Cytoplasmic segment spans residues 378–381 (KKFK). Residues 382–405 (ITVKKAAYMAFCLSLFEYLLYFLH) traverse the membrane as a helical segment. The Extracellular portion of the chain corresponds to 406–513 (FMITCDNFPV…PECANKLQYF (108 aa)). The region spanning 433–488 (NKVLADCNRGCSCSTNSWDPVCGDNGLAYMSACLAGCKKSVGTGTNMVFQNCSCIR) is the Kazal-like domain. 3 disulfides stabilise this stretch: Cys439–Cys469, Cys445–Cys465, and Cys454–Cys486. Asn483 and Asn492 each carry an N-linked (GlcNAc...) asparagine glycan. A helical membrane pass occupies residues 514–536 (LIMSVIGSFIYSITAIPGYMVLL). Residues 537 to 545 (RCIKPEEKS) are Cytoplasmic-facing. A helical transmembrane segment spans residues 546–571 (LGIGLHAFCTRVFAGIPAPIYFGALI). Over 572–605 (DRTCLHWGTLKCGEPGACRMYNINNFRRIYLVLP) the chain is Extracellular. Residues 606 to 623 (AALRGSSYLPALFILILM) traverse the membrane as a helical segment. The Cytoplasmic segment spans residues 624-670 (RKFQFPGEIDSSETELAEMKITVKKSECTDVHGSPQVENDGELKTRL).

This sequence belongs to the organo anion transporter (TC 2.A.60) family. Highly expressed in the kidney, moderately abundant in the retina, and even lower in the liver. Expressed (at protein level) in the small intestine. Expressed at lower levels in brain,lung, and retina.

Its subcellular location is the cell membrane. It is found in the basal cell membrane. The enzyme catalyses taurocholate(out) = taurocholate(in). It carries out the reaction glycocholate(out) = glycocholate(in). The catalysed reaction is taurochenodeoxycholate(out) = taurochenodeoxycholate(in). It catalyses the reaction tauroursodeoxycholate(out) = tauroursodeoxycholate(in). The enzyme catalyses 3,3',5'-triiodo-L-thyronine(out) = 3,3',5'-triiodo-L-thyronine(in). It carries out the reaction L-thyroxine(out) = L-thyroxine(in). The catalysed reaction is taurodeoxycholate(out) = taurodeoxycholate(in). It catalyses the reaction glycodeoxycholate(out) = glycodeoxycholate(in). The enzyme catalyses glycochenodeoxycholate(out) = glycochenodeoxycholate(in). It carries out the reaction glycoursodeoxycholate(out) = glycoursodeoxycholate(in). The catalysed reaction is estrone 3-sulfate(out) = estrone 3-sulfate(in). It catalyses the reaction prostaglandin E2(out) = prostaglandin E2(in). The enzyme catalyses substance P(out) = substance P(in). Functionally, na(+)-independent transporter that mediates the cellular uptake of a broad range of organic anions such as the endogenous bile salts cholate and deoxycholate, either in their unconjugated or conjugated forms (taurocholate and glycocholate), estrone 3-sulfate and prostaglandin E2, at the plasma membrane. Responsible for intestinal absorption of bile acids. Capable of thyroid hormone transport (both T3 or 3,3',5'-triiodo-L-thyronine, and T4 or L-tyroxine). Plays roles in blood-brain and -cerebrospinal fluid barrier transport of organic anions and signal mediators, and in hormone uptake by neural cells. May also play a role in the reuptake of neuropeptides such as substance P/TAC1 and vasoactive intestinal peptide/VIP released from retinal neurons. Shows a pH-sensitive substrate specificity which may be ascribed to the protonation state of the binding site and leads to a stimulation of substrate transport in an acidic microenvironment. Hydrogencarbonate/HCO3(-) acts as the probable counteranion that exchanges for organic anions. May contribute to regulate the transport of organic compounds in testis across the blood-testis-barrier. This is Solute carrier organic anion transporter family member 1A5 (Slco1a5) from Rattus norvegicus (Rat).